Reading from the N-terminus, the 116-residue chain is Large ribosomal subunit protein uL18 (116 aa).

Belongs to the universal ribosomal protein uL18 family. In terms of assembly, part of the 50S ribosomal subunit; part of the 5S rRNA/L5/L18/L25 subcomplex. Contacts the 5S and 23S rRNAs.

This is one of the proteins that bind and probably mediate the attachment of the 5S RNA into the large ribosomal subunit, where it forms part of the central protuberance. In Pseudomonas putida (strain GB-1), this protein is Large ribosomal subunit protein uL18.